Reading from the N-terminus, the 294-residue chain is Syntaxin-19 (294 aa).

The t-SNARE coiled-coil homology domain maps to 209-271 (LSEIEQRHKE…NNTKEKFGLA (63 aa)).

Belongs to the syntaxin family. Interacts with EGFR.

It localises to the cell membrane. It is found in the cytoplasm. Plays a role in endosomal trafficking of the epidermal growth factor receptor (EGFR). The polypeptide is Syntaxin-19 (STX19) (Pongo abelii (Sumatran orangutan)).